Reading from the N-terminus, the 465-residue chain is Mothers against decapentaplegic homolog 5 (465 aa).

Position 2 is an N-acetylthreonine (threonine 2). The MH1 domain occupies 13–137 (PAVKRLLGWK…YKRVESPVLP (125 aa)). 4 residues coordinate Zn(2+): cysteine 65, cysteine 110, cysteine 122, and histidine 127. Residues 163-243 (NEPHMPQNAT…GQDNSQPMDT (81 aa)) form a disordered region. A compositionally biased stretch (polar residues) spans 169–182 (QNATFPDSFHQPNS). Pro residues predominate over residues 186-197 (PLSPNSPYPPSP). A compositionally biased stretch (low complexity) spans 198–214 (ASSTYPNSPASSGPGSP). Residues 234–243 (GQDNSQPMDT) show a composition bias toward polar residues. Residues 271 to 465 (WCSIVYYELN…SPLNPISSVS (195 aa)) enclose the MH2 domain. Residues serine 463 and serine 465 each carry the phosphoserine modification.

The protein belongs to the dwarfin/SMAD family. Homodimer. Forms trimers with the co-SMAD SMAD4. Interacts with PEBP2-alpha subunit and SMURF1. Interacts with SUV39H1 and SUV39H2. Interacts (via MH2 domain) with LEMD3. Interacts with WWP1. Interacts with TMEM119. Interacts with ZNF8. Interacts with RANBP3L. Interacts with HK1. Interacts with HGS; this interaction attenuates BMP signaling. In terms of processing, phosphorylated on serine by BMP (bone morphogenetic proteins) type 1 receptor kinase. Ubiquitin-mediated proteolysis by SMAD-specific E3 ubiquitin ligase SMURF1.

Its subcellular location is the cytoplasm. It localises to the nucleus. The protein resides in the mitochondrion. In terms of biological role, transcriptional regulator that plays a role in various cellular processes including embryonic development, cell differentiation, angiogenesis and tissue homeostasis. Upon BMP ligand binding to their receptors at the cell surface, is phosphorylated by activated type I BMP receptors (BMPRIs) and associates with SMAD4 to form a heteromeric complex which translocates into the nucleus acting as transcription factor. In turn, the hetero-trimeric complex recognizes cis-regulatory elements containing Smad Binding Elements (SBEs) to modulate the outcome of the signaling network. Non-phosphorylated SMAD5 has a cytoplasmic role in energy metabolism regulation by promoting mitochondrial respiration and glycolysis in response to cytoplasmic pH changes. Mechanistically, interacts with hexokinase 1/HK1 and thereby accelerates glycolysis. This chain is Mothers against decapentaplegic homolog 5 (Smad5), found in Rattus norvegicus (Rat).